Here is a 159-residue protein sequence, read N- to C-terminus: Ribosomal RNA large subunit methyltransferase H (159 aa).

Residues Leu76, Gly108, and 127-132 contribute to the S-adenosyl-L-methionine site; that span reads FSKMTF.

The protein belongs to the RNA methyltransferase RlmH family. As to quaternary structure, homodimer.

It is found in the cytoplasm. It catalyses the reaction pseudouridine(1915) in 23S rRNA + S-adenosyl-L-methionine = N(3)-methylpseudouridine(1915) in 23S rRNA + S-adenosyl-L-homocysteine + H(+). In terms of biological role, specifically methylates the pseudouridine at position 1915 (m3Psi1915) in 23S rRNA. The polypeptide is Ribosomal RNA large subunit methyltransferase H (Clostridium kluyveri (strain NBRC 12016)).